The following is a 775-amino-acid chain: Ubiquitin carboxyl-terminal hydrolase 14 (775 aa).

A UBP-type 1; degenerate zinc finger spans residues 1–108 (MSCPHLTETN…EDLYDYFYVP (108 aa)). Cys25, Cys28, Cys41, Cys44, Cys49, His56, His60, His66, Cys153, His155, Cys174, Cys177, Cys186, Cys189, Cys194, His207, His211, His217, Cys236, and Cys239 together coordinate Zn(2+). The UBP-type 2 zinc finger occupies 151 to 259 (TTCDHIINLP…THMLNFGIDI (109 aa)). Residues 300 to 774 (TGLKNLGNSC…TGYVYLFERL (475 aa)) form the USP domain. Catalysis depends on Cys309, which acts as the Nucleophile. Ser456 bears the Phosphoserine mark. 2 consecutive UBA domains span residues 576 to 617 (EWNQ…LFEH) and 639 to 679 (SVSE…ILNH). His730 serves as the catalytic Proton acceptor.

It belongs to the peptidase C19 family.

The catalysed reaction is Thiol-dependent hydrolysis of ester, thioester, amide, peptide and isopeptide bonds formed by the C-terminal Gly of ubiquitin (a 76-residue protein attached to proteins as an intracellular targeting signal).. The chain is Ubiquitin carboxyl-terminal hydrolase 14 (ubp14) from Schizosaccharomyces pombe (strain 972 / ATCC 24843) (Fission yeast).